The following is a 526-amino-acid chain: MARLSLLTLLALGSAALAKKDTFQTKCAALQHKVKLPNVHVNFVEYVPGGTNLDLPDNAPSCGASSQAVSTDMCRIAMAVDTSDSSQITLEAWFPRDYTGRFLSTGNGGLSGCIQYYDLAYAAGLGFATVGANNGHNGTSGEPFYQHPEVVEDFAHRSVHTGVVVGKQLTKLFYDKGFKKSYYLGCSTGGRQGFKSVQKYPKDFDGIVAGAPAFNFVNLISWSAYFYSLTGSNTSESYLSPAMWKIAHDEIVRQCDELDGAKDGIIEDTDLCHPRLETIICKPGAKDTANCLTGAQAKTVRDVLSPMYGVNGTLLYPRMQPGSEVYAAGIMYNGEPFQYSTDWYRYVVYNNPDWDDTKWSVEDAAAALAQNPYDIQTFDADISSFRGAGGKVLTYHGLQDQMISSDNSKLYYARVAETMKLPPSELDEFYRFFPVSGMTHCAGGDGAYGIGNGLGSYNGVDPENNVLMAMVQWVEKGIAPEFIRGAKFAEGPGSAVEYTRKHCRYPRRNVYKGPGNYTDENAWECV.

The N-terminal stretch at 1–18 (MARLSLLTLLALGSAALA) is a signal peptide. 2 disulfides stabilise this stretch: C27–C74 and C62–C113. N137 is a glycosylation site (N-linked (GlcNAc...) asparagine). 4 cysteine pairs are disulfide-bonded: C186–C441, C255–C272, C281–C291, and C503–C525. The active-site Acyl-ester intermediate is the S187. The N-linked (GlcNAc...) asparagine glycan is linked to N233. Residues D256, D259, A261, D263, and I265 each contribute to the Ca(2+) site. N311 carries N-linked (GlcNAc...) asparagine glycosylation. Active-site charge relay system residues include D400 and H440. N-linked (GlcNAc...) asparagine glycosylation occurs at N516.

Belongs to the tannase family.

It is found in the secreted. The catalysed reaction is feruloyl-polysaccharide + H2O = ferulate + polysaccharide.. Its function is as follows. Involved in degradation of plant cell walls. Hydrolyzes the feruloyl-arabinose ester bond in arabinoxylans as well as the feruloyl-galactose and feruloyl-arabinose ester bonds in pectin. In Aspergillus clavatus (strain ATCC 1007 / CBS 513.65 / DSM 816 / NCTC 3887 / NRRL 1 / QM 1276 / 107), this protein is Probable feruloyl esterase B (faeB).